The sequence spans 1020 residues: Retinoblastoma-related protein (1020 aa).

Polar residues-rich tracts occupy residues Ser382–Leu391 and Ala398–Asn409. The interval Ser382–Asn409 is disordered. The segment at Thr415–Leu616 is domain A. The pocket stretch occupies residues Thr415–Pro869. The spacer stretch occupies residues Thr617–Glu737. The tract at residues Thr738 to Pro869 is domain B.

This sequence belongs to the retinoblastoma protein (RB) family.

The protein localises to the nucleus. In terms of biological role, regulator of biological processes that recruits a histone deacetylase to control gene transcription. May play a role in the entry into mitosis, negatively regulating the cell proliferation. Formation of stable complexes with geminiviridae replication-associated proteins may create a cellular environment which favors viral DNA replication. This chain is Retinoblastoma-related protein (RBR), found in Ricinus communis (Castor bean).